We begin with the raw amino-acid sequence, 854 residues long: Probable inactive serine/threonine-protein kinase DDB_G0274821 (854 aa).

The region spanning 1–266 (MPIKESFKRI…WPKLFIHPFF (266 aa)) is the Protein kinase domain. Asparagine 32 and asparagine 106 each carry an N-linked (GlcNAc...) asparagine glycan. The tract at residues 116–135 (NNNNNNNNNNNNNNNNNNNN) is disordered. 4 N-linked (GlcNAc...) asparagine glycosylation sites follow: asparagine 163, asparagine 279, asparagine 283, and asparagine 290. Positions 289–331 (LNKSSSSSSSSSSSSSSSSSSSSSSSLSFQQQQQPNNISSPNL) are disordered. The span at 292–322 (SSSSSSSSSSSSSSSSSSSSSSSLSFQQQQQ) shows a compositional bias: low complexity. N-linked (GlcNAc...) asparagine glycans are attached at residues asparagine 325, asparagine 347, and asparagine 365. Residues 384–408 (IISPNRPSSPPLSSLSSCSSSSSSS) form a disordered region. Asparagine 414 is a glycosylation site (N-linked (GlcNAc...) asparagine). A disordered region spans residues 425–446 (NNNNNNNNNNNNNNNNNNNNNN). 3 N-linked (GlcNAc...) asparagine glycosylation sites follow: asparagine 520, asparagine 541, and asparagine 620. Positions 627-650 (SSPPPSSSSSSSSPSSPSSTSPSL) are disordered. Low complexity predominate over residues 633–650 (SSSSSSSPSSPSSTSPSL). Asparagine 757 is a glycosylation site (N-linked (GlcNAc...) asparagine). Residues 770–792 (HWRVQISFLNILFILITINNNFI) form a helical membrane-spanning segment.

The protein belongs to the protein kinase superfamily. Ser/Thr protein kinase family.

It localises to the membrane. The polypeptide is Probable inactive serine/threonine-protein kinase DDB_G0274821 (Dictyostelium discoideum (Social amoeba)).